The primary structure comprises 157 residues: S-ribosylhomocysteine lyase 2 (157 aa).

Positions 54, 58, and 124 each coordinate Fe cation.

This sequence belongs to the LuxS family. In terms of assembly, homodimer. Fe cation serves as cofactor.

The catalysed reaction is S-(5-deoxy-D-ribos-5-yl)-L-homocysteine = (S)-4,5-dihydroxypentane-2,3-dione + L-homocysteine. Involved in the synthesis of autoinducer 2 (AI-2) which is secreted by bacteria and is used to communicate both the cell density and the metabolic potential of the environment. The regulation of gene expression in response to changes in cell density is called quorum sensing. Catalyzes the transformation of S-ribosylhomocysteine (RHC) to homocysteine (HC) and 4,5-dihydroxy-2,3-pentadione (DPD). This Lactobacillus delbrueckii subsp. bulgaricus (strain ATCC BAA-365 / Lb-18) protein is S-ribosylhomocysteine lyase 2.